A 219-amino-acid polypeptide reads, in one-letter code: Cytidylate kinase (219 aa).

ATP is bound at residue 10 to 18 (GPAAAGKST).

This sequence belongs to the cytidylate kinase family. Type 1 subfamily.

The protein resides in the cytoplasm. The catalysed reaction is CMP + ATP = CDP + ADP. It catalyses the reaction dCMP + ATP = dCDP + ADP. The sequence is that of Cytidylate kinase from Staphylococcus saprophyticus subsp. saprophyticus (strain ATCC 15305 / DSM 20229 / NCIMB 8711 / NCTC 7292 / S-41).